We begin with the raw amino-acid sequence, 172 residues long: DNA-directed RNA polymerase II subunit rpb7 (172 aa).

This sequence belongs to the eukaryotic RPB7/RPC8 RNA polymerase subunit family. Component of the RNA polymerase II (Pol II) complex consisting of 12 subunits. RPB4 and RPB7 form a subcomplex that protrudes from the 10-subunit Pol II core complex.

Its subcellular location is the nucleus. Its function is as follows. DNA-dependent RNA polymerase catalyzes the transcription of DNA into RNA using the four ribonucleoside triphosphates as substrates. Component of RNA polymerase II which synthesizes mRNA precursors and many functional non-coding RNAs. Pol II is the central component of the basal RNA polymerase II transcription machinery. It is composed of mobile elements that move relative to each other. RPB7 is part of a subcomplex with RPB4 that binds to a pocket formed by RPB1, RPB2 and RPB6 at the base of the clamp element. The RPB4-RPB7 subcomplex seems to lock the clamp via RPB7 in the closed conformation thus preventing double-stranded DNA to enter the active site cleft. The RPB4-RPB7 subcomplex binds single-stranded DNA and RNA. The sequence is that of DNA-directed RNA polymerase II subunit rpb7 (polr2g) from Dictyostelium discoideum (Social amoeba).